A 1060-amino-acid chain; its full sequence is MSEVNIDAGLFYKRLSIFQKQLTANNIPQALIIVGARSDDNTYKKSTVLQNWLLGYEFIHTAIYITDKKCIFITSEGKSKHLKHLTNQKPDLVELWIRTKDVEHNKQLFIKLLETMTKLDSKYGKILKDKYDGKFIDEWNQILNDDNNNNNNNTTNDHALSAVDLAVTVSQALAVKDSEEFNNTKIASNASVVMMDTFVNDMMIIVDDEKKITNSQLTDQIEDKIENNKWYLKTKLGKNLLQSIKDFDPEYLEYCYSPIIQSGGDYDLKPSAVSTDKPLIGEGVILSSIGLRYKSYCSNIARTFLIDPTSEMETNYDFLLQLQKYIVDNLLKDGVPANKVYQDTIDYIKKERPDLVNHFTKNCGWLLGMEFRDSTFILNAKTTDRKLTTGQIISLTIGFNNLSNDKNDKNDKNDNKTNHQKNKQTYALLLTDTIKITDDSSILLTNYSKDRAAISFSFNDDNETQKENNNNNNKRPGLSQTSNTTALKLESTENTAILKSKLRHENTNADDANSEKLRQEIQIKLHEKRLQEGLARFSKADATDADDFKPIFKKYESYVRESQIPNSVNDLKIHIDYKNQTIILPISGRPVPFHINSYKSGSQNEEGDFTYLRLNFNSPGAGGNVTKKQELPYEDSPDNSFLRSITIRSRDRQRMVDVYKAIQDLKKDSVKREQEKKQMADVITQANLIELKGSRVKKLNNVFIRPTPDTKKIGGVLQIHENGLRYQSQPQSQSNFKNDQRVDVLFSNIKHLFFQPCKDELIVLIHCHLKNPIMIGKRKTFDVQFYREASDMAFDETGGRKRKYRYGDEDELQQEQEERRRKALLDKEFKGFAELIADSSHGMVDLDIPFRELGFQGVPFRSSVLCVPTRDCLVQLIDPPYLVVTLEEIEIAHLERVQFGLKNFDLVFVFKDFNKPVVHINTIPVELLEDVKSWLTDVDIPISEGQMNLNWVQIMKTVLADPYQFFIDGGWAFLTGQGESDEEEESDEESDFRVSDEDPQDEDEESDDYASEEESDDYSGSDDDGSGGGGDDDDDDSESGEDWDALERKAAKADRNSGFD.

Positions 458 to 490 (FNDDNETQKENNNNNNKRPGLSQTSNTTALKLE) are disordered. Polar residues predominate over residues 478–490 (LSQTSNTTALKLE). Positions 508–532 (NADDANSEKLRQEIQIKLHEKRLQE) form a coiled coil. The interval 977–1060 (QGESDEEEES…AKADRNSGFD (84 aa)) is disordered. Acidic residues-rich tracts occupy residues 979 to 990 (ESDEEEESDEES) and 997 to 1044 (EDPQ…EDWD). Residues 1045–1060 (ALERKAAKADRNSGFD) are compositionally biased toward basic and acidic residues.

Belongs to the peptidase M24 family. SPT16 subfamily. Forms a stable heterodimer with POB3. The SPT16-POB3 dimer weakly associates with multiple molecules of NHP6 to form the FACT complex.

The protein localises to the nucleus. Its subcellular location is the chromosome. Its function is as follows. Component of the FACT complex, a general chromatin factor that acts to reorganize nucleosomes. The FACT complex is involved in multiple processes that require DNA as a template such as mRNA elongation, DNA replication and DNA repair. During transcription elongation the FACT complex acts as a histone chaperone that both destabilizes and restores nucleosomal structure. It facilitates the passage of RNA polymerase II and transcription by promoting the dissociation of one histone H2A-H2B dimer from the nucleosome, then subsequently promotes the reestablishment of the nucleosome following the passage of RNA polymerase II. This is FACT complex subunit SPT16 (CDC68) from Candida albicans (strain SC5314 / ATCC MYA-2876) (Yeast).